Consider the following 279-residue polypeptide: Large ribosomal subunit protein uL24m (279 aa).

Residues Met-1–Thr-31 constitute a mitochondrion transit peptide. Positions Arg-34 to Lys-51 are enriched in basic and acidic residues. Residues Arg-34–Phe-56 are disordered. The KOW domain maps to Lys-70–Ile-100. Positions Pro-185–Asn-204 are disordered. A compositionally biased stretch (basic and acidic residues) spans Pro-187 to Thr-202.

Belongs to the universal ribosomal protein uL24 family. As to quaternary structure, component of the mitochondrial large ribosomal subunit (mt-LSU). Mature yeast 74S mitochondrial ribosomes consist of a small (37S) and a large (54S) subunit. The 37S small subunit contains a 15S ribosomal RNA (15S mt-rRNA) and at least 32 different proteins. The 54S large subunit contains a 21S rRNA (21S mt-rRNA) and at least 45 different proteins. uL24m forms the wall of the exit tunnel.

The protein resides in the mitochondrion. Its function is as follows. Component of the mitochondrial ribosome (mitoribosome), a dedicated translation machinery responsible for the synthesis of mitochondrial genome-encoded proteins, including at least some of the essential transmembrane subunits of the mitochondrial respiratory chain. The mitoribosomes are attached to the mitochondrial inner membrane and translation products are cotranslationally integrated into the membrane. The polypeptide is Large ribosomal subunit protein uL24m (mrpl40) (Schizosaccharomyces pombe (strain 972 / ATCC 24843) (Fission yeast)).